Reading from the N-terminus, the 733-residue chain is Cell division cycle protein 48 homolog AF_1297 (733 aa).

Residues 223-230 (GPPGTGKT) and 496-503 (GPPGTGKT) each bind ATP.

It belongs to the AAA ATPase family. CDC48 subfamily.

This chain is Cell division cycle protein 48 homolog AF_1297, found in Archaeoglobus fulgidus (strain ATCC 49558 / DSM 4304 / JCM 9628 / NBRC 100126 / VC-16).